Here is a 488-residue protein sequence, read N- to C-terminus: Histone deacetylase 2 (488 aa).

Residues 9–322 (KKKVCYYYDG…WTYETAVALD (314 aa)) form a histone deacetylase region. Positions 28 and 32 each coordinate 1D-myo-inositol 1,4,5,6-tetrakisphosphate. An N6-acetyllysine; alternate modification is found at Lys-75. Lys-75 is covalently cross-linked (Glycyl lysine isopeptide (Lys-Gly) (interchain with G-Cter in SUMO2); alternate). Residue His-142 is part of the active site. Ca(2+)-binding residues include Asp-175, Asp-177, His-179, Phe-188, Thr-191, Val-194, Ser-198, and Phe-199. Residues Asp-177 and His-179 each coordinate Zn(2+). An N6-acetyllysine modification is found at Lys-221. Tyr-223 contacts Ca(2+). Position 262 is an S-nitrosocysteine (Cys-262). Residue Asp-265 participates in Zn(2+) binding. Residue Arg-271 participates in 1D-myo-inositol 1,4,5,6-tetrakisphosphate binding. An S-nitrosocysteine modification is found at Cys-274. A disordered region spans residues 389-488 (AVHEDSGDED…GAKSEQLSNP (100 aa)). Phosphoserine is present on residues Ser-394, Ser-407, Ser-422, and Ser-424. The segment covering 402-417 (PDKRISIRASDKRIAC) has biased composition (basic and acidic residues). Residues 418–428 (DEEFSDSEDEG) are compositionally biased toward acidic residues. A compositionally biased stretch (basic and acidic residues) spans 429 to 481 (EGGRRNVADHKKGAKKARIEEDKKETEDKKTDVKEEDKSKDNSGEKTDPKGAK). Residues Lys-439, Lys-452, Lys-458, Lys-462, Lys-478, and Lys-481 each participate in a glycyl lysine isopeptide (Lys-Gly) (interchain with G-Cter in SUMO2) cross-link.

This sequence belongs to the histone deacetylase family. HD type 1 subfamily. In terms of assembly, part of the core histone deacetylase (HDAC) complex composed of HDAC1, HDAC2, RBBP4 and RBBP7, the core complex associates with SIN3, SAP18 and SAP30 to form the SIN3 HDAC complex. Component of the nucleosome remodeling and deacetylase (NuRD) repressor complex, composed of core proteins MTA1, MTA2, MTA3, RBBP4, RBBP7, HDAC1, HDAC2, MBD2, MBD3, and peripherally associated proteins CDK2AP1, CDK2AP2, GATAD2A, GATAD2B, CHD3, CHD4 and CHD5. The exact stoichiometry of the NuRD complex is unknown, and some subunits such as MBD2 and MBD3, GATAD2A and GATAD2B, and CHD3, CHD4 and CHD5 define mutually exclusive NuRD complexes. Component of a RCOR/GFI/KDM1A/HDAC complex. Component of a BHC histone deacetylase complex that contains HDAC1, HDAC2, HMG20B, KDM1A, RCOR1 and PHF21A. The BHC complex may also contain ZMYM2, ZNF217, ZMYM3, GSE1 and GTF2I. Part of a complex containing the core histones H2A, H2B, H3 and H4, DEK and unphosphorylated DAXX. Part of a complex containing ATR and CHD4. Forms a heterologous complex at least with YY1. Interacts in the late S-phase of DNA-replication with DNMT1 in the other transcriptional repressor complex composed of DNMT1, DMAP1, PCNA, CAF1. Component of a mSin3A corepressor complex that contains SIN3A, SAP130, SUDS3, ARID4B, HDAC1 and HDAC2. Part of a complex composed of TRIM28, HDAC1, HDAC2 and EHMT2. Part of a complex containing at least CDYL, MIER1, MIER2, HDAC1 and HDAC2. Component of a histone deacetylase complex containing DNTTIP1, ZNF541, HDAC1 and HDAC2. Forms a complex comprising APPL1, RUVBL2, APPL2, CTNNB1 and HDAC1. Interacts directly with GFI1. Interacts directly with GFI1B. Interacts with APEX1; the interaction is not dependent on the acetylated status of APEX1. Interacts with ATR. Interacts with BCL6 (non-acetylated form). Interacts with BEND3. Interacts with CBFA2T3. Interacts with CDK2AP1. Interacts with CHD4. Interacts with CHD5. Interacts with CHFR. Interacts with CRY1. Interacts with DNMT1. Interacts with GATAD2A. Interacts with HCFC1. Interacts with HDAC7. Interacts with HDAC10. Interacts with INSM1. Interacts with KDM4A. Interacts with MACROH2A1 (via the non-histone region). Interacts with MBD3L2. Interacts with MTA1, with a preference for sumoylated MTA1. Interacts with NACC2. Interacts with NRIP1. Interacts with PELP1. Interacts with PIMREG. Interacts with PRDM6. Interacts with PWWP2B Interacts with SAP30. Interacts with SAP30L. Interacts with SETDB1. Interacts with SIX3. Interacts with SMARCAD1. Interacts with SNW1. Interacts with SPHK2. Interacts with SPEN/MINT. Interacts (CK2 phosphorylated form) with SP3. Interacts with SUV39H1. Interacts with TSHZ3 (via its N-terminus). Interacts with ZMYND8. Interacts with ZNF431. Interacts with ZNF263; recruited to the SIX3 promoter along with other proteins involved in chromatin modification and transcriptional corepression where it contributes to transcriptional repression. Identified in a complex with HDAC1, KCTD19, DNTTIP1 and ZNF541. Component of the SIN3B complex, which includes SIN3B, HDAC2, PHF12 and MORF4L1; interacts directly with all subunits. Requires Zn(2+) as cofactor. Ca(2+) is required as a cofactor. Post-translationally, S-nitrosylated by GAPDH. In neurons, S-nitrosylation at Cys-262 and Cys-274 does not affect enzyme activity, but induces HDAC2 release from chromatin. This in turn increases acetylation of histones surrounding neurotrophin-dependent gene promoters and promotes their transcription. In embryonic cortical neurons, S-Nitrosylation regulates dendritic growth and branching.

Its subcellular location is the nucleus. It localises to the cytoplasm. The catalysed reaction is N(6)-acetyl-L-lysyl-[histone] + H2O = L-lysyl-[histone] + acetate. The enzyme catalyses N(6)-acetyl-L-lysyl-[protein] + H2O = L-lysyl-[protein] + acetate. It carries out the reaction N(6)-(2E)-butenoyl-L-lysyl-[protein] + H2O = (2E)-2-butenoate + L-lysyl-[protein]. It catalyses the reaction N(6)-(2-hydroxyisobutanoyl)-L-lysyl-[protein] + H2O = 2-hydroxy-2-methylpropanoate + L-lysyl-[protein]. The catalysed reaction is N(6)-[(S)-lactoyl]-L-lysyl-[protein] + H2O = (S)-lactate + L-lysyl-[protein]. Inositol tetraphosphate (1D-myo-inositol 1,4,5,6-tetrakisphosphate) may act as an intermolecular glue between HDAC2 and N-Cor repressor complex components. Its function is as follows. Histone deacetylase that catalyzes the deacetylation of lysine residues on the N-terminal part of the core histones (H2A, H2B, H3 and H4). Histone deacetylation gives a tag for epigenetic repression and plays an important role in transcriptional regulation, cell cycle progression and developmental events. Histone deacetylases act via the formation of large multiprotein complexes. Forms transcriptional repressor complexes by associating with MAD, SIN3, YY1 and N-COR. Component of a RCOR/GFI/KDM1A/HDAC complex that suppresses, via histone deacetylase (HDAC) recruitment, a number of genes implicated in multilineage blood cell development. Acts as a component of the histone deacetylase NuRD complex which participates in the remodeling of chromatin. Component of the SIN3B complex that represses transcription and counteracts the histone acetyltransferase activity of EP300 through the recognition H3K27ac marks by PHF12 and the activity of the histone deacetylase HDAC2. Also deacetylates non-histone targets: deacetylates TSHZ3, thereby regulating its transcriptional repressor activity. May be involved in the transcriptional repression of circadian target genes, such as PER1, mediated by CRY1 through histone deacetylation. Involved in MTA1-mediated transcriptional corepression of TFF1 and CDKN1A. In addition to protein deacetylase activity, also acts as a protein-lysine deacylase by recognizing other acyl groups: catalyzes removal of (2E)-butenoyl (crotonyl), lactoyl (lactyl) and 2-hydroxyisobutanoyl (2-hydroxyisobutyryl) acyl groups from lysine residues, leading to protein decrotonylation, delactylation and de-2-hydroxyisobutyrylation, respectively. The protein is Histone deacetylase 2 of Mus musculus (Mouse).